The sequence spans 365 residues: Mitogen-activated protein kinase 13 (365 aa).

In terms of domain architecture, Protein kinase spans 25 to 308; sequence YVSPTHVGSG…AAQALTHPFF (284 aa). Position 31-39 (31-39) interacts with ATP; that stretch reads VGSGAYGSV. S47 is modified (phosphoserine). ATP is bound at residue K54. Residue D150 is the Proton acceptor of the active site. Phosphothreonine; by MAP2K3, MAP2K4, MAP2K6 and MAP2K7 is present on T180. Positions 180-182 match the TXY motif; it reads TGY. Residue Y182 is modified to Phosphotyrosine; by MAP2K3, MAP2K4, MAP2K6 and MAP2K7. S350 is subject to Phosphoserine.

This sequence belongs to the protein kinase superfamily. CMGC Ser/Thr protein kinase family. MAP kinase subfamily. In terms of assembly, interacts with MAPK8IP2. It depends on Mg(2+) as a cofactor. Post-translationally, dually phosphorylated on Thr-180 and Tyr-182 by MAP2K3/MKK3, MAP2K4/MKK4, MAP2K6/MKK6 and MAP2K7/MKK7, which activates the enzyme. Dephosphorylated by dual specificity phosphatase DUSP1. In terms of tissue distribution, expressed in testes, pancreas, small intestine, lung and kidney. Abundant in macrophages, also present in neutrophils, CD4+ T-cells, and endothelial cells.

The catalysed reaction is L-seryl-[protein] + ATP = O-phospho-L-seryl-[protein] + ADP + H(+). The enzyme catalyses L-threonyl-[protein] + ATP = O-phospho-L-threonyl-[protein] + ADP + H(+). With respect to regulation, activated by phosphorylation on threonine and tyrosine by dual specificity kinases, MAP2K3/MKK3, MAP2K6/MKK6, MAP2K4/MKK4 and MAP2K7/MKK7. Activation by ultraviolet radiation, hyperosmotic shock, anisomycin or by TNF-alpha is mediated by MAP2K3/MKK3. Inhibited by dual specificity phosphatase DUSP1. In terms of biological role, serine/threonine kinase which acts as an essential component of the MAP kinase signal transduction pathway. MAPK13 is one of the four p38 MAPKs which play an important role in the cascades of cellular responses evoked by extracellular stimuli such as pro-inflammatory cytokines or physical stress leading to direct activation of transcription factors such as ELK1 and ATF2. Accordingly, p38 MAPKs phosphorylate a broad range of proteins and it has been estimated that they may have approximately 200 to 300 substrates each. MAPK13 is one of the less studied p38 MAPK isoforms. Some of the targets are downstream kinases such as MAPKAPK2, which are activated through phosphorylation and further phosphorylate additional targets. Plays a role in the regulation of protein translation by phosphorylating and inactivating EEF2K. Involved in cytoskeletal remodeling through phosphorylation of MAPT and STMN1. Mediates UV irradiation induced up-regulation of the gene expression of CXCL14. Plays an important role in the regulation of epidermal keratinocyte differentiation, apoptosis and skin tumor development. Phosphorylates the transcriptional activator MYB in response to stress which leads to rapid MYB degradation via a proteasome-dependent pathway. MAPK13 also phosphorylates and down-regulates PRKD1 during regulation of insulin secretion in pancreatic beta cells. This Homo sapiens (Human) protein is Mitogen-activated protein kinase 13 (MAPK13).